We begin with the raw amino-acid sequence, 332 residues long: Agamous-like MADS-box protein AGL66 (332 aa).

The region spanning 1-61 is the MADS-box domain; the sequence is MGRVKLEIKR…DRLSLFSGKT (61 aa). Residues 120–151 are a coiled coil; it reads TAINSDVEELEHEVYKLQQQLLMAEEELRKYE.

In terms of assembly, forms a heterodimer with AGL30. In terms of tissue distribution, expressed in pollen.

The protein resides in the nucleus. In terms of biological role, probable transcription factor that forms a heterodimer with the MADS-box protein AGL30 and is involved in the regulation of pollen maturation at the late stages of pollen development and pollen tube growth. The chain is Agamous-like MADS-box protein AGL66 from Arabidopsis thaliana (Mouse-ear cress).